Consider the following 994-residue polypeptide: Glycine dehydrogenase (decarboxylating), mitochondrial (994 aa).

The transit peptide at 1-21 (MLKLLRNNGINKLKSNLIRNY) directs the protein to the mitochondrion. N6-(pyridoxal phosphate)lysine is present on K742.

This sequence belongs to the GcvP family. Homodimer. The glycine cleavage system is composed of four proteins: P, T, L and H. It depends on pyridoxal 5'-phosphate as a cofactor.

It is found in the mitochondrion. The enzyme catalyses N(6)-[(R)-lipoyl]-L-lysyl-[glycine-cleavage complex H protein] + glycine + H(+) = N(6)-[(R)-S(8)-aminomethyldihydrolipoyl]-L-lysyl-[glycine-cleavage complex H protein] + CO2. The glycine cleavage system catalyzes the degradation of glycine. The P protein binds the alpha-amino group of glycine through its pyridoxal phosphate cofactor; CO(2) is released and the remaining methylamine moiety is then transferred to the lipoamide cofactor of the H protein. In Dictyostelium discoideum (Social amoeba), this protein is Glycine dehydrogenase (decarboxylating), mitochondrial (gcvP).